The primary structure comprises 325 residues: Olfactory receptor 5H6 (325 aa).

Over 1 to 41 (MFLYLCFIFQRTCSEEMEEENATLLTEFVLTGFLHQPDCKI) the chain is Extracellular. The N-linked (GlcNAc...) asparagine glycan is linked to asparagine 21. Residues 42–62 (PLFLAFLVIYLITIMGNLGLI) form a helical membrane-spanning segment. The Cytoplasmic segment spans residues 63 to 70 (VLIWKDPH). The chain crosses the membrane as a helical span at residues 71–91 (LHIPMYLFLGSLAFVDASLSS). At 92-115 (TVTPKMLINFLAKSKMISLSECMV) the chain is on the extracellular side. Cysteine 113 and cysteine 205 form a disulfide bridge. A helical transmembrane segment spans residues 116–136 (QFFSLVTTVTTECFLLATMAY). Residues 137 to 155 (DRYVAICKALLYPVIMTNE) are Cytoplasmic-facing. Residues 156-176 (LCIQLLVLSFIGGLLHALIHE) form a helical membrane-spanning segment. Over 177–212 (AFSFRLTFCNSNIIQHFYCDIIPLLKISCTDSSINF) the chain is Extracellular. Residues 213–233 (LMVFIFAGSVQVFTIGTILIS) traverse the membrane as a helical segment. Residues 234–253 (YTIILFTILEKKSIKGIRKA) are Cytoplasmic-facing. Residues 254–274 (VSTCGAHLLSVSLYYGPLTFK) traverse the membrane as a helical segment. Residues 275–287 (YLGSASPQADDQD) lie on the Extracellular side of the membrane. A helical transmembrane segment spans residues 288–308 (MMESLFYTVIVPLLNPMIYSL). Over 309–325 (RNKQVIASFTKMFKSNV) the chain is Cytoplasmic.

The protein belongs to the G-protein coupled receptor 1 family.

It localises to the cell membrane. In terms of biological role, odorant receptor. The polypeptide is Olfactory receptor 5H6 (OR5H6) (Homo sapiens (Human)).